The sequence spans 271 residues: Formamidopyrimidine-DNA glycosylase (271 aa).

Catalysis depends on P2, which acts as the Schiff-base intermediate with DNA. E3 (proton donor) is an active-site residue. Catalysis depends on K58, which acts as the Proton donor; for beta-elimination activity. H91, R110, and R152 together coordinate DNA. The FPG-type zinc finger occupies 237 to 271 (NVYGRGGKACKKCRKPLTEKKLGQRTTVYCTHCQK). The Proton donor; for delta-elimination activity role is filled by R261.

This sequence belongs to the FPG family. As to quaternary structure, monomer. It depends on Zn(2+) as a cofactor.

It carries out the reaction Hydrolysis of DNA containing ring-opened 7-methylguanine residues, releasing 2,6-diamino-4-hydroxy-5-(N-methyl)formamidopyrimidine.. It catalyses the reaction 2'-deoxyribonucleotide-(2'-deoxyribose 5'-phosphate)-2'-deoxyribonucleotide-DNA = a 3'-end 2'-deoxyribonucleotide-(2,3-dehydro-2,3-deoxyribose 5'-phosphate)-DNA + a 5'-end 5'-phospho-2'-deoxyribonucleoside-DNA + H(+). In terms of biological role, involved in base excision repair of DNA damaged by oxidation or by mutagenic agents. Acts as a DNA glycosylase that recognizes and removes damaged bases. Has a preference for oxidized purines, such as 7,8-dihydro-8-oxoguanine (8-oxoG). Has AP (apurinic/apyrimidinic) lyase activity and introduces nicks in the DNA strand. Cleaves the DNA backbone by beta-delta elimination to generate a single-strand break at the site of the removed base with both 3'- and 5'-phosphates. This is Formamidopyrimidine-DNA glycosylase from Saccharophagus degradans (strain 2-40 / ATCC 43961 / DSM 17024).